The sequence spans 610 residues: tRNA uridine 5-carboxymethylaminomethyl modification enzyme MnmG (610 aa).

An FAD-binding site is contributed by 14–19 (GAGHAG). Residue 274–288 (GPRYCPSIEDKIVKF) coordinates NAD(+).

It belongs to the MnmG family. As to quaternary structure, homodimer. Heterotetramer of two MnmE and two MnmG subunits. Requires FAD as cofactor.

It is found in the cytoplasm. Its function is as follows. NAD-binding protein involved in the addition of a carboxymethylaminomethyl (cmnm) group at the wobble position (U34) of certain tRNAs, forming tRNA-cmnm(5)s(2)U34. The sequence is that of tRNA uridine 5-carboxymethylaminomethyl modification enzyme MnmG from Chlamydia trachomatis serovar L2b (strain UCH-1/proctitis).